Reading from the N-terminus, the 262-residue chain is Mitochondrial calcium uniporter regulator 1 (262 aa).

Residues glutamate 138–lysine 175 are a coiled coil. The chain crosses the membrane as a helical span at residues threonine 239 to tryptophan 261.

It belongs to the CCDC90 family.

It is found in the mitochondrion inner membrane. Its function is as follows. Key regulator of mitochondrial calcium uniporter (mcu) required for calcium entry into mitochondrion. The polypeptide is Mitochondrial calcium uniporter regulator 1 (Xenopus tropicalis (Western clawed frog)).